We begin with the raw amino-acid sequence, 171 residues long: uncharacterized protein (171 aa).

This is an uncharacterized protein from Thermofilum pendens.